We begin with the raw amino-acid sequence, 629 residues long: tRNA uridine 5-carboxymethylaminomethyl modification enzyme MnmG (629 aa).

FAD is bound by residues 14-19, Val-126, and Ser-181; that span reads GAGHAG. Residue 273–287 participates in NAD(+) binding; it reads GPRYCPSIEDKVVRF. Gln-370 contributes to the FAD binding site.

Belongs to the MnmG family. As to quaternary structure, homodimer. Heterotetramer of two MnmE and two MnmG subunits. Requires FAD as cofactor.

The protein localises to the cytoplasm. Functionally, NAD-binding protein involved in the addition of a carboxymethylaminomethyl (cmnm) group at the wobble position (U34) of certain tRNAs, forming tRNA-cmnm(5)s(2)U34. This Bacillus cereus (strain ATCC 10987 / NRS 248) protein is tRNA uridine 5-carboxymethylaminomethyl modification enzyme MnmG.